The chain runs to 426 residues: MSKSENLYHAARELIPGGVNSPVRAFTGVGGTPLFIERADGAYLYDVDGKAYIDYVGSWGPMVLGHNHPAIRNAVIEAASRGLSFGAPTEMEVKMAELVTELVPTMDMVRMVNSGTEATMSAIRLARGFTGRDKIIKFEGCYHGHADCLLVKAGSGALTLGQPNSPGVPADFAKHTLTCTYNDLASVRAAFEQYPQDIACIIVEPVAGNMNCIPPQPEFLPGLRALCDEFGALLIIDEVMTGFRVALAGAQAYYGVEPDLTCLGKIIGGGMPVGAFGGRREVMDALAPTGPVYQAGTLSGNPIAMAAGFACLSEVAQPGVHETLTELTNQLADGLLNAARETGIPLVVNNVGGMFGIFFTDAETVTCYQDVVKCDVERFKRFFHLMLEEGVYLAPSAFEAGFMSIAHSEEDINNTIDAARRVFAKL.

Lys265 carries the N6-(pyridoxal phosphate)lysine modification.

Belongs to the class-III pyridoxal-phosphate-dependent aminotransferase family. HemL subfamily. In terms of assembly, homodimer. It depends on pyridoxal 5'-phosphate as a cofactor.

The protein localises to the cytoplasm. It catalyses the reaction (S)-4-amino-5-oxopentanoate = 5-aminolevulinate. It functions in the pathway porphyrin-containing compound metabolism; protoporphyrin-IX biosynthesis; 5-aminolevulinate from L-glutamyl-tRNA(Glu): step 2/2. This chain is Glutamate-1-semialdehyde 2,1-aminomutase, found in Klebsiella pneumoniae (strain 342).